Here is a 557-residue protein sequence, read N- to C-terminus: Formate--tetrahydrofolate ligase 2 (557 aa).

An ATP-binding site is contributed by 66–73 (TPAGEGKT).

It belongs to the formate--tetrahydrofolate ligase family.

It catalyses the reaction (6S)-5,6,7,8-tetrahydrofolate + formate + ATP = (6R)-10-formyltetrahydrofolate + ADP + phosphate. It participates in one-carbon metabolism; tetrahydrofolate interconversion. The polypeptide is Formate--tetrahydrofolate ligase 2 (Streptococcus pyogenes serotype M28 (strain MGAS6180)).